The following is a 246-amino-acid chain: Submandibular gland secretory Glx-rich protein CA (246 aa).

The N-terminal stretch at methionine 1–glycine 18 is a signal peptide. The tract at residues serine 14–proline 223 is disordered. Low complexity-rich tracts occupy residues proline 39–aspartate 50, glutamate 58–alanine 71, glutamine 81–proline 93, glutamine 104–proline 116, glutamine 127–threonine 141, glutamine 150–glutamine 159, and valine 178–asparagine 196. 5 tandem repeats follow at residues glutamate 67 to asparagine 89, glutamine 90 to asparagine 112, glutamine 113 to aspartate 135, glutamine 136 to asparagine 158, and glutamine 159 to proline 181. The interval glutamate 67–proline 181 is 5 X 23 AA tandem repeats. The segment covering proline 197–arginine 216 has biased composition (basic and acidic residues).

In terms of tissue distribution, submandibular gland acinar cells.

The protein localises to the secreted. Its function is as follows. GRP proteins have a marked affinity for hydroxyapatite. They may play a role in the formation of the protective acquired pellicle at the saliva-tooth interface. The chain is Submandibular gland secretory Glx-rich protein CA (Grpca) from Rattus norvegicus (Rat).